The primary structure comprises 96 residues: C-C motif chemokine 20 (96 aa).

A signal peptide spans 1–26; it reads MACKHLPFLALAGVLLAYLCSQSEAA. 2 disulfide bridges follow: Cys-31-Cys-58 and Cys-32-Cys-74.

This sequence belongs to the intercrine beta (chemokine CC) family. In terms of tissue distribution, low levels in thymus and lung.

The protein resides in the secreted. Its function is as follows. Acts as a ligand for C-C chemokine receptor CCR6. Signals through binding and activation of CCR6 and induces a strong chemotactic response and mobilization of intracellular calcium ions. The ligand-receptor pair CCL20-CCR6 is responsible for the chemotaxis of dendritic cells (DC), effector/memory T-cells and B-cells and plays an important role at skin and mucosal surfaces under homeostatic and inflammatory conditions, as well as in pathology, including cancer and autoimmune diseases. CCL20 acts as a chemotactic factor that attracts lymphocytes and, slightly, neutrophils, but not monocytes. Involved in the recruitment of both the pro-inflammatory IL17 producing helper T-cells (Th17) and the regulatory T-cells (Treg) to sites of inflammation. Required for optimal migration of thymic natural regulatory T cells (nTregs) and DN1 early thymocyte progenitor cells. Positively regulates sperm motility and chemotaxis via its binding to CCR6 which triggers Ca2+ mobilization in the sperm which is important for its motility. May be involved in formation and function of the mucosal lymphoid tissues by attracting lymphocytes and dendritic cells towards epithelial cells. The sequence is that of C-C motif chemokine 20 (Ccl20) from Rattus norvegicus (Rat).